The primary structure comprises 263 residues: Phosphatidylglycerol--prolipoprotein diacylglyceryl transferase (263 aa).

4 consecutive transmembrane segments (helical) span residues Ile15–Ala35, Phe52–Gln72, Ile83–Val103, and Ala112–Ile132. Arg134 contributes to the a 1,2-diacyl-sn-glycero-3-phospho-(1'-sn-glycerol) binding site. 3 consecutive transmembrane segments (helical) span residues Val170–Leu190, Gly200–Met220, and Phe227–Leu247.

The protein belongs to the Lgt family.

It localises to the cell membrane. It carries out the reaction L-cysteinyl-[prolipoprotein] + a 1,2-diacyl-sn-glycero-3-phospho-(1'-sn-glycerol) = an S-1,2-diacyl-sn-glyceryl-L-cysteinyl-[prolipoprotein] + sn-glycerol 1-phosphate + H(+). It participates in protein modification; lipoprotein biosynthesis (diacylglyceryl transfer). Functionally, catalyzes the transfer of the diacylglyceryl group from phosphatidylglycerol to the sulfhydryl group of the N-terminal cysteine of a prolipoprotein, the first step in the formation of mature lipoproteins. The polypeptide is Phosphatidylglycerol--prolipoprotein diacylglyceryl transferase (Streptococcus thermophilus (strain ATCC BAA-491 / LMD-9)).